The sequence spans 555 residues: Transcriptional adapter 2b (555 aa).

Residues 8–63 form a ZZ-type zinc finger; the sequence is FTKYNCTNCQDDIQGIRVHCAECENFDLCLQCFAAGAEIGAHQNNHSYQFMDTGTS. Residues cysteine 13, cysteine 16, cysteine 27, cysteine 30, cysteine 36, cysteine 39, histidine 49, and histidine 53 each coordinate Zn(2+). Residues 69 to 121 form the SANT domain; sequence RGKGAWTAREEIRLLDAIEQYGFGNWEDISKHIETKSAEDAKEEYVNKFVNGT. The tract at residues 318–372 is disordered; the sequence is THRSTGPYGHGKTDHTHTSNGSHRPPSSSLHSPQPNLRKVEMSSGGEASSNSIAP. Over residues 339–352 the composition is skewed to low complexity; the sequence is SHRPPSSSLHSPQP. Residues 363-372 are compositionally biased toward polar residues; it reads GEASSNSIAP.

In terms of assembly, component of histone acetyltransferase complexes containing Gcn5 and Ada3. As to quaternary structure, can heterooligomerize with Isoform A. Component of the Spt-Ada-Gcn5 acetyltransferase (SAGA) complex consisting of Ada1, Ada2b (Isoform B), Ada3, wda, Saf6, Spt3, Spt7, Spt20, Taf9, Taf10b, Taf12, Nipped-A/Tra1, Sf3b3, Sf3b5, not/nonstop, Sgf11, Sgf29, e(y)2, Atxn7 and Gcn5. Taf5 and Taf10, which has partially redundant properties with Taf10b, may also be part of this complex. Interacts (via C-terminus) with Spt3 and Taf12; the interactions are direct. Interacts with Ada3; the interaction is probably direct. May also interact directly with Spt7 and Gcn5. Interacts with p53. Can heterooligomerize with Isoform B. Component of the Chiffon histone acetyltransferase (CHAT) complex consisting of Ada3, Sgf29, Gcn5, chif/chiffon and Ada2b (Isoform A). Interacts (via N-terminus) with Gcn5 and Ada3; the interaction is direct. Can interact directly with Spt7 in vitro but in vivo this interaction is not stable probably due to the absence of other SAGA components. Interacts with p53. As to expression, expressed in nurse cells of stage 10 egg chambers and transcripts are dumped into the oocyte when nurse cells degenerate at late oogenesis.

The protein resides in the nucleus. In terms of biological role, component of several Gcn5-containing histone acetyltransferase complexes that regulate nucleosome organization; involved in acetylation of histone H3, particularly on Lys-10 (H3K9ac) and Lys-15 (H3K14ac). Regulates the transcription of a subset of genes during development; affects recruitment of RNA polymerase II. May be involved in the function of some acidic activation domains, which activate transcription at distant sites. Involved in the p53-dependent apoptosis pathway response to DNA damage by genotoxic agents. Component of the SAGA histone acetyltransferase complex, which predominantly acetylates histone H3. Functionally, component of the CHAT histone acetyltransferase complex, which predominantly acetylates histone H3. The protein is Transcriptional adapter 2b of Drosophila melanogaster (Fruit fly).